The primary structure comprises 306 residues: Pantothenate kinase (306 aa).

90-97 (GSVAVGKS) is an ATP binding site.

It belongs to the prokaryotic pantothenate kinase family.

It localises to the cytoplasm. The enzyme catalyses (R)-pantothenate + ATP = (R)-4'-phosphopantothenate + ADP + H(+). It functions in the pathway cofactor biosynthesis; coenzyme A biosynthesis; CoA from (R)-pantothenate: step 1/5. The polypeptide is Pantothenate kinase (Listeria monocytogenes serotype 4b (strain CLIP80459)).